The following is a 336-amino-acid chain: DNA-directed RNA polymerase subunit alpha (336 aa).

Positions 1-232 (MIQKNWQELI…DQLGVFVNFD (232 aa)) are alpha N-terminal domain (alpha-NTD). The segment at 248-336 (FNPALLKKVD…DLAKRYEDQY (89 aa)) is alpha C-terminal domain (alpha-CTD).

Belongs to the RNA polymerase alpha chain family. In terms of assembly, homodimer. The RNAP catalytic core consists of 2 alpha, 1 beta, 1 beta' and 1 omega subunit. When a sigma factor is associated with the core the holoenzyme is formed, which can initiate transcription.

The catalysed reaction is RNA(n) + a ribonucleoside 5'-triphosphate = RNA(n+1) + diphosphate. Functionally, DNA-dependent RNA polymerase catalyzes the transcription of DNA into RNA using the four ribonucleoside triphosphates as substrates. The protein is DNA-directed RNA polymerase subunit alpha of Rhizobium radiobacter (Agrobacterium tumefaciens).